Here is a 266-residue protein sequence, read N- to C-terminus: Tryptophan synthase alpha chain (266 aa).

Active-site proton acceptor residues include Glu-49 and Asp-60.

The protein belongs to the TrpA family. As to quaternary structure, tetramer of two alpha and two beta chains.

The enzyme catalyses (1S,2R)-1-C-(indol-3-yl)glycerol 3-phosphate + L-serine = D-glyceraldehyde 3-phosphate + L-tryptophan + H2O. The protein operates within amino-acid biosynthesis; L-tryptophan biosynthesis; L-tryptophan from chorismate: step 5/5. In terms of biological role, the alpha subunit is responsible for the aldol cleavage of indoleglycerol phosphate to indole and glyceraldehyde 3-phosphate. In Trichormus variabilis (strain ATCC 29413 / PCC 7937) (Anabaena variabilis), this protein is Tryptophan synthase alpha chain.